Reading from the N-terminus, the 446-residue chain is DDB1- and CUL4-associated factor 12 (446 aa).

A compositionally biased stretch (basic residues) spans 1–12 (MTRRAVSRKRRA). Positions 1-33 (MTRRAVSRKRRAAPGTGPGEQSDWDHSAHKRKR) are disordered. 4 WD repeats span residues 132 to 173 (SHQS…PVCV), 177 to 215 (GHND…LSKS), 245 to 284 (PVNC…AKLL), and 333 to 370 (EQGS…FLED).

The protein belongs to the WD repeat DCAF12 family. As to quaternary structure, component of the DCX(DCAF12) E3 ubiquitin ligase complex, at least composed of cul4 (cul4a or cul4b), ddb1, dcaf12 and rbx1.

It is found in the cytoplasm. Its subcellular location is the cytoskeleton. The protein resides in the microtubule organizing center. It localises to the centrosome. The protein localises to the nucleus. The protein operates within protein modification; protein ubiquitination. Its function is as follows. Substrate-recognition component of a DCX (DDB1-CUL4-X-box) E3 ubiquitin-protein ligase complex of the DesCEND (destruction via C-end degrons) pathway, which recognizes a C-degron located at the extreme C terminus of target proteins, leading to their ubiquitination and degradation. The C-degron recognized by the DesCEND pathway is usually a motif of less than ten residues and can be present in full-length proteins, truncated proteins or proteolytically cleaved forms. The DCX(DCAF12) complex specifically recognizes proteins with a diglutamate (Glu-Glu) at the C-terminus leading to their ubiquitination and degradation. Also directly recognizes the C-terminal glutamate-leucine (Glu-Leu) degron as an alternative degron in proteins leading to their ubiquitination and degradation. This is DDB1- and CUL4-associated factor 12 from Xenopus tropicalis (Western clawed frog).